The following is a 535-amino-acid chain: Bifunctional purine biosynthesis protein PurH (535 aa).

One can recognise an MGS-like domain in the interval 6–151; it reads TRLPVRRALI…KNHKDVAIVV (146 aa).

Belongs to the PurH family.

The enzyme catalyses (6R)-10-formyltetrahydrofolate + 5-amino-1-(5-phospho-beta-D-ribosyl)imidazole-4-carboxamide = 5-formamido-1-(5-phospho-D-ribosyl)imidazole-4-carboxamide + (6S)-5,6,7,8-tetrahydrofolate. It carries out the reaction IMP + H2O = 5-formamido-1-(5-phospho-D-ribosyl)imidazole-4-carboxamide. Its pathway is purine metabolism; IMP biosynthesis via de novo pathway; 5-formamido-1-(5-phospho-D-ribosyl)imidazole-4-carboxamide from 5-amino-1-(5-phospho-D-ribosyl)imidazole-4-carboxamide (10-formyl THF route): step 1/1. It participates in purine metabolism; IMP biosynthesis via de novo pathway; IMP from 5-formamido-1-(5-phospho-D-ribosyl)imidazole-4-carboxamide: step 1/1. This is Bifunctional purine biosynthesis protein PurH from Ectopseudomonas mendocina (strain ymp) (Pseudomonas mendocina).